Consider the following 186-residue polypeptide: ATP synthase subunit delta (186 aa).

This sequence belongs to the ATPase delta chain family. As to quaternary structure, F-type ATPases have 2 components, F(1) - the catalytic core - and F(0) - the membrane proton channel. F(1) has five subunits: alpha(3), beta(3), gamma(1), delta(1), epsilon(1). CF(0) has four main subunits: a(1), b(1), b'(1) and c(10-14). The alpha and beta chains form an alternating ring which encloses part of the gamma chain. F(1) is attached to F(0) by a central stalk formed by the gamma and epsilon chains, while a peripheral stalk is formed by the delta, b and b' chains.

Its subcellular location is the cell inner membrane. F(1)F(0) ATP synthase produces ATP from ADP in the presence of a proton or sodium gradient. F-type ATPases consist of two structural domains, F(1) containing the extramembraneous catalytic core and F(0) containing the membrane proton channel, linked together by a central stalk and a peripheral stalk. During catalysis, ATP synthesis in the catalytic domain of F(1) is coupled via a rotary mechanism of the central stalk subunits to proton translocation. Functionally, this protein is part of the stalk that links CF(0) to CF(1). It either transmits conformational changes from CF(0) to CF(1) or is implicated in proton conduction. This is ATP synthase subunit delta from Jannaschia sp. (strain CCS1).